The primary structure comprises 130 residues: Small ribosomal subunit protein uS9 (130 aa).

It belongs to the universal ribosomal protein uS9 family.

In Paracidovorax citrulli (strain AAC00-1) (Acidovorax citrulli), this protein is Small ribosomal subunit protein uS9.